We begin with the raw amino-acid sequence, 233 residues long: 2,3,4,5-tetrahydropyridine-2,6-dicarboxylate N-acetyltransferase (233 aa).

Belongs to the transferase hexapeptide repeat family. DapH subfamily.

The catalysed reaction is (S)-2,3,4,5-tetrahydrodipicolinate + acetyl-CoA + H2O = L-2-acetamido-6-oxoheptanedioate + CoA. It participates in amino-acid biosynthesis; L-lysine biosynthesis via DAP pathway; LL-2,6-diaminopimelate from (S)-tetrahydrodipicolinate (acetylase route): step 1/3. Functionally, catalyzes the transfer of an acetyl group from acetyl-CoA to tetrahydrodipicolinate. This chain is 2,3,4,5-tetrahydropyridine-2,6-dicarboxylate N-acetyltransferase, found in Thermosipho africanus (strain TCF52B).